A 238-amino-acid chain; its full sequence is Ribosomal RNA small subunit methyltransferase G (238 aa).

Residues G78, 129-130, and R148 contribute to the S-adenosyl-L-methionine site; that span reads AE.

It belongs to the methyltransferase superfamily. RNA methyltransferase RsmG family.

The protein resides in the cytoplasm. Its function is as follows. Specifically methylates the N7 position of a guanine in 16S rRNA. The chain is Ribosomal RNA small subunit methyltransferase G from Caldicellulosiruptor bescii (strain ATCC BAA-1888 / DSM 6725 / KCTC 15123 / Z-1320) (Anaerocellum thermophilum).